The sequence spans 473 residues: 6-phosphogluconate dehydrogenase, decarboxylating (473 aa).

Residues 10–15, 33–35, 74–76, and Asn-102 each bind NADP(+); these read GMAVMG, NRT, and VKS. Residues Asn-102 and 128–130 contribute to the substrate site; that span reads SGG. The active-site Proton acceptor is the Lys-182. 185-186 contacts substrate; that stretch reads HN. The active-site Proton donor is Glu-189. Substrate-binding residues include Tyr-190, Lys-260, Arg-287, Arg-446, and His-452.

It belongs to the 6-phosphogluconate dehydrogenase family. Homodimer.

The enzyme catalyses 6-phospho-D-gluconate + NADP(+) = D-ribulose 5-phosphate + CO2 + NADPH. The protein operates within carbohydrate degradation; pentose phosphate pathway; D-ribulose 5-phosphate from D-glucose 6-phosphate (oxidative stage): step 3/3. Functionally, catalyzes the oxidative decarboxylation of 6-phosphogluconate to ribulose 5-phosphate and CO(2), with concomitant reduction of NADP to NADPH. This Buchnera aphidicola subsp. Schizaphis graminum (strain Sg) protein is 6-phosphogluconate dehydrogenase, decarboxylating (gnd).